The primary structure comprises 754 residues: 5-methyltetrahydropteroyltriglutamate--homocysteine methyltransferase (754 aa).

5-methyltetrahydropteroyltri-L-glutamate-binding positions include 17-20 (RELK) and lysine 117. L-homocysteine contacts are provided by residues 431–433 (IGS) and glutamate 484. L-methionine is bound by residues 431 to 433 (IGS) and glutamate 484. Residues 515–516 (RC) and tryptophan 561 each bind 5-methyltetrahydropteroyltri-L-glutamate. Residue aspartate 599 participates in L-homocysteine binding. Aspartate 599 is an L-methionine binding site. 5-methyltetrahydropteroyltri-L-glutamate is bound at residue glutamate 605. The Zn(2+) site is built by histidine 641, cysteine 643, and glutamate 665. Residue histidine 694 is the Proton donor of the active site. Residue cysteine 726 participates in Zn(2+) binding.

This sequence belongs to the vitamin-B12 independent methionine synthase family. It depends on Zn(2+) as a cofactor.

It carries out the reaction 5-methyltetrahydropteroyltri-L-glutamate + L-homocysteine = tetrahydropteroyltri-L-glutamate + L-methionine. The protein operates within amino-acid biosynthesis; L-methionine biosynthesis via de novo pathway; L-methionine from L-homocysteine (MetE route): step 1/1. Catalyzes the transfer of a methyl group from 5-methyltetrahydrofolate to homocysteine resulting in methionine formation. The chain is 5-methyltetrahydropteroyltriglutamate--homocysteine methyltransferase from Salmonella agona (strain SL483).